The chain runs to 154 residues: Myoglobin (154 aa).

A Globin domain is found at 2–148; it reads GLSDGEWQLV…FRNDIAAKYK (147 aa). The residue at position 4 (serine 4) is a Phosphoserine. Histidine 65 is a binding site for nitrite. O2 is bound at residue histidine 65. Phosphothreonine occurs at positions 68 and 75. Heme b is bound at residue histidine 94. Serine 121 is modified (phosphoserine).

It belongs to the globin family. Monomeric.

The protein resides in the cytoplasm. Its subcellular location is the sarcoplasm. The catalysed reaction is Fe(III)-heme b-[protein] + nitric oxide + H2O = Fe(II)-heme b-[protein] + nitrite + 2 H(+). The enzyme catalyses H2O2 + AH2 = A + 2 H2O. In terms of biological role, monomeric heme protein which primary function is to store oxygen and facilitate its diffusion within muscle tissues. Reversibly binds oxygen through a pentacoordinated heme iron and enables its timely and efficient release as needed during periods of heightened demand. Depending on the oxidative conditions of tissues and cells, and in addition to its ability to bind oxygen, it also has a nitrite reductase activity whereby it regulates the production of bioactive nitric oxide. Under stress conditions, like hypoxia and anoxia, it also protects cells against reactive oxygen species thanks to its pseudoperoxidase activity. This Mus musculus (Mouse) protein is Myoglobin.